Here is a 158-residue protein sequence, read N- to C-terminus: 6,7-dimethyl-8-ribityllumazine synthase (158 aa).

5-amino-6-(D-ribitylamino)uracil contacts are provided by residues Trp27, 58-60 (SFE), and 81-83 (VII). 86–87 (GT) provides a ligand contact to (2S)-2-hydroxy-3-oxobutyl phosphate. Catalysis depends on His89, which acts as the Proton donor. Phe114 contacts 5-amino-6-(D-ribitylamino)uracil. A (2S)-2-hydroxy-3-oxobutyl phosphate-binding site is contributed by Arg128.

The protein belongs to the DMRL synthase family.

It carries out the reaction (2S)-2-hydroxy-3-oxobutyl phosphate + 5-amino-6-(D-ribitylamino)uracil = 6,7-dimethyl-8-(1-D-ribityl)lumazine + phosphate + 2 H2O + H(+). The protein operates within cofactor biosynthesis; riboflavin biosynthesis; riboflavin from 2-hydroxy-3-oxobutyl phosphate and 5-amino-6-(D-ribitylamino)uracil: step 1/2. Functionally, catalyzes the formation of 6,7-dimethyl-8-ribityllumazine by condensation of 5-amino-6-(D-ribitylamino)uracil with 3,4-dihydroxy-2-butanone 4-phosphate. This is the penultimate step in the biosynthesis of riboflavin. The sequence is that of 6,7-dimethyl-8-ribityllumazine synthase from Leifsonia xyli subsp. xyli (strain CTCB07).